A 193-amino-acid chain; its full sequence is ATP-dependent Clp protease proteolytic subunit 1 (193 aa).

The active-site Nucleophile is Ser98. His123 is an active-site residue.

This sequence belongs to the peptidase S14 family. As to quaternary structure, fourteen ClpP subunits assemble into 2 heptameric rings which stack back to back to give a disk-like structure with a central cavity, resembling the structure of eukaryotic proteasomes.

It localises to the cytoplasm. The enzyme catalyses Hydrolysis of proteins to small peptides in the presence of ATP and magnesium. alpha-casein is the usual test substrate. In the absence of ATP, only oligopeptides shorter than five residues are hydrolyzed (such as succinyl-Leu-Tyr-|-NHMec, and Leu-Tyr-Leu-|-Tyr-Trp, in which cleavage of the -Tyr-|-Leu- and -Tyr-|-Trp bonds also occurs).. Cleaves peptides in various proteins in a process that requires ATP hydrolysis. Has a chymotrypsin-like activity. Plays a major role in the degradation of misfolded proteins. This Bacillus anthracis protein is ATP-dependent Clp protease proteolytic subunit 1.